Here is an 85-residue protein sequence, read N- to C-terminus: Putative membrane protein insertion efficiency factor (85 aa).

It belongs to the UPF0161 family.

The protein resides in the cell membrane. Could be involved in insertion of integral membrane proteins into the membrane. The sequence is that of Putative membrane protein insertion efficiency factor from Leifsonia xyli subsp. xyli (strain CTCB07).